The following is a 265-amino-acid chain: tRNA pseudouridine synthase A (265 aa).

Asp53 functions as the Nucleophile in the catalytic mechanism. Substrate is bound at residue Tyr111.

This sequence belongs to the tRNA pseudouridine synthase TruA family. In terms of assembly, homodimer.

It carries out the reaction uridine(38/39/40) in tRNA = pseudouridine(38/39/40) in tRNA. In terms of biological role, formation of pseudouridine at positions 38, 39 and 40 in the anticodon stem and loop of transfer RNAs. This Acinetobacter baumannii (strain AB307-0294) protein is tRNA pseudouridine synthase A.